A 396-amino-acid polypeptide reads, in one-letter code: Histidine-rich glycoprotein (396 aa).

Cystatin domains lie at 1–102 and 103–169; these read AVNP…SALT and NMRA…RFSA. Disulfide bonds link Cys-7–Cys-375, Cys-56–Cys-67, Cys-77–Cys-92, Cys-123–Cys-297, Cys-137–Cys-160, and Cys-212–Cys-242. N-linked (GlcNAc...) asparagine; partial glycosylation occurs at Asn-70. Asn-91 and Asn-122 each carry an N-linked (GlcNAc...) asparagine glycan. Positions 176–322 are disordered; that stretch reads RPFHSGEHEH…GPGKGHFRFH (147 aa). The segment covering 197–208 has biased composition (basic and acidic residues); the sequence is GSKDHGHPHESY. Residue Asn-220 is glycosylated (N-linked (GlcNAc...) asparagine). Residues 233 to 246 show a composition bias toward pro residues; it reads LPFPPPGLRCPHPP. Basic and acidic residues predominate over residues 255-265; sequence PPHDHSSDEHH. A compositionally biased stretch (basic residues) spans 266–284; sequence PHGHHPHGHHPHGHHPHGH. Residues 285 to 296 show a composition bias toward basic and acidic residues; the sequence is HPPDNDFYDHGP. Basic residues predominate over residues 304–322; the sequence is PPPRHSKERGPGKGHFRFH. Ser-309 is modified (phosphoserine).

Interacts (via the HRR domain) with TPM1; the interaction appears to contribute to the antiangiogenic properties of the HRR domain. Interacts with THBS1 (via the TSP type I repeats); the interaction blocks the antiangiogenic effect of THBS1 with CD36. Interacts with PLG (via its Kringle domains); the interaction tethers PLG to the cell surface and enhances its activation. Interacts with THBS2; the interaction blocks the antiangiogenic effect of THBS2 with CD36. Interacts with HPSE; the interaction is enhanced at acidic pH, partially inhibits binding of HPSE to cell surface receptors and modulates its enzymatic activity. Interacts (via the HRR domain) with TMP1; the interaction partially mediates the antiangiogenic properties of HRG. Interacts with kappa and lambda light chains of IgG molecules. Interacts with ATP5F1A; the interaction occurs on the surface of T-cells and alters their cell morphology in concert with CONA. Binds IgG molecules containing kappa and lambda light chains and inhibits the formation of insoluble immunoglobulin complexes. Interacts with F12; the interaction, which is enhanced in the presence of zinc ions and inhibited by heparin-binding to HRG, inhibits factor XII autoactivation and contact-initiated coagulation. In terms of processing, N-glycosylated. Post-translationally, proteolytic cleavage produces several HRG fragments which are mostly disulfide-linked and, therefore, not released. On platelet activation, may release a 33 kDa antiangiogenic peptide which encompasses the HRR.

The protein localises to the secreted. Its function is as follows. Plasma glycoprotein that binds a number of ligands such as heme, heparin, heparan sulfate, thrombospondin, plasminogen, and divalent metal ions. Inhibits rosette formation. Acts as an adapter protein and implicated in regulating many processes such as immune complex and pathogen clearance, cell adhesion, angiogenesis, coagulation and fibrinolysis. Mediates clearance of necrotic cells through enhancing the phagocytosis of necrotic cells in a heparan sulfate-dependent pathway. This process can be regulated by the presence of certain HRG ligands such as heparin and zinc ions. Binds to IgG subclasses of immunoglobins containing kappa and lambda light chains with different affinities regulating their clearance and inhibiting the formation of insoluble immune complexes. Tethers plasminogen to the cell surface. Binds T-cells and alters the cell morphology. Modulates angiogenesis by blocking the CD6-mediated antiangiongenic effect of thrombospondins, THBS1 and THBS2. The chain is Histidine-rich glycoprotein (HRG) from Bos taurus (Bovine).